The primary structure comprises 222 residues: Flagellar L-ring protein (222 aa).

Positions 1-18 (MKTTRAIAMLGLLLGLAA) are cleaved as a signal peptide. Cys19 carries N-palmitoyl cysteine lipidation. Cys19 carries the S-diacylglycerol cysteine lipid modification.

Belongs to the FlgH family. The basal body constitutes a major portion of the flagellar organelle and consists of four rings (L,P,S, and M) mounted on a central rod.

It localises to the cell outer membrane. The protein localises to the bacterial flagellum basal body. Its function is as follows. Assembles around the rod to form the L-ring and probably protects the motor/basal body from shearing forces during rotation. In Thiobacillus denitrificans (strain ATCC 25259 / T1), this protein is Flagellar L-ring protein.